Here is a 390-residue protein sequence, read N- to C-terminus: Anhydro-N-acetylmuramic acid kinase (390 aa).

An ATP-binding site is contributed by 9 to 16 (GTSLDGID).

It belongs to the anhydro-N-acetylmuramic acid kinase family.

It catalyses the reaction 1,6-anhydro-N-acetyl-beta-muramate + ATP + H2O = N-acetyl-D-muramate 6-phosphate + ADP + H(+). Its pathway is amino-sugar metabolism; 1,6-anhydro-N-acetylmuramate degradation. The protein operates within cell wall biogenesis; peptidoglycan recycling. Functionally, catalyzes the specific phosphorylation of 1,6-anhydro-N-acetylmuramic acid (anhMurNAc) with the simultaneous cleavage of the 1,6-anhydro ring, generating MurNAc-6-P. Is required for the utilization of anhMurNAc either imported from the medium or derived from its own cell wall murein, and thus plays a role in cell wall recycling. The chain is Anhydro-N-acetylmuramic acid kinase from Bacillus cereus (strain B4264).